A 311-amino-acid polypeptide reads, in one-letter code: Putative dihydroorotate dehydrogenase A (fumarate) (311 aa).

Residues lysine 45, 69 to 73 (NSMGL), and asparagine 128 each bind substrate. 45–46 (KT) contacts FMN. Asparagine 128 provides a ligand contact to FMN. The active-site Nucleophile is cysteine 131. FMN is bound by residues lysine 165 and valine 193. 194-195 (NS) is a binding site for substrate. FMN-binding positions include glycine 220, 248–249 (GG), and 270–271 (GT).

The protein belongs to the dihydroorotate dehydrogenase family. Type 1 subfamily. As to quaternary structure, homodimer. FMN is required as a cofactor.

Its subcellular location is the cytoplasm. The enzyme catalyses (S)-dihydroorotate + fumarate = orotate + succinate. The protein operates within pyrimidine metabolism; UMP biosynthesis via de novo pathway. Functionally, catalyzes the conversion of dihydroorotate to orotate with fumarate as the electron acceptor. In Streptococcus pyogenes serotype M3 (strain SSI-1), this protein is Putative dihydroorotate dehydrogenase A (fumarate) (pyrD).